The chain runs to 535 residues: GMP synthase [glutamine-hydrolyzing] (535 aa).

The region spanning 20–210 (PVLVVDFGAQ…LHRCAALPND (191 aa)) is the Glutamine amidotransferase type-1 domain. Cysteine 97 serves as the catalytic Nucleophile. Active-site residues include histidine 184 and glutamate 186. The 199-residue stretch at 211–409 (WDASSIIEDQ…LGLPDEIVWR (199 aa)) folds into the GMPS ATP-PPase domain. 238–244 (SGGVDSA) contacts ATP.

As to quaternary structure, homodimer.

The enzyme catalyses XMP + L-glutamine + ATP + H2O = GMP + L-glutamate + AMP + diphosphate + 2 H(+). It participates in purine metabolism; GMP biosynthesis; GMP from XMP (L-Gln route): step 1/1. Functionally, catalyzes the synthesis of GMP from XMP. In Bifidobacterium longum (strain NCC 2705), this protein is GMP synthase [glutamine-hydrolyzing].